We begin with the raw amino-acid sequence, 290 residues long: Diaminopimelate epimerase (290 aa).

Substrate-binding residues include Asn-17, Gln-49, and Asn-69. Catalysis depends on Cys-78, which acts as the Proton donor. Residues 79-80, Asn-166, Asn-199, and 217-218 each bind substrate; these read GN and ER. Cys-226 (proton acceptor) is an active-site residue. 227–228 lines the substrate pocket; that stretch reads GS.

Belongs to the diaminopimelate epimerase family. In terms of assembly, homodimer.

It is found in the cytoplasm. The enzyme catalyses (2S,6S)-2,6-diaminopimelate = meso-2,6-diaminopimelate. Its pathway is amino-acid biosynthesis; L-lysine biosynthesis via DAP pathway; DL-2,6-diaminopimelate from LL-2,6-diaminopimelate: step 1/1. Catalyzes the stereoinversion of LL-2,6-diaminopimelate (L,L-DAP) to meso-diaminopimelate (meso-DAP), a precursor of L-lysine and an essential component of the bacterial peptidoglycan. The sequence is that of Diaminopimelate epimerase from Afipia carboxidovorans (strain ATCC 49405 / DSM 1227 / KCTC 32145 / OM5) (Oligotropha carboxidovorans).